A 348-amino-acid polypeptide reads, in one-letter code: Protein RecA (348 aa).

ATP is bound at residue 67–74 (GPESSGKT).

It belongs to the RecA family.

Its subcellular location is the cytoplasm. In terms of biological role, can catalyze the hydrolysis of ATP in the presence of single-stranded DNA, the ATP-dependent uptake of single-stranded DNA by duplex DNA, and the ATP-dependent hybridization of homologous single-stranded DNAs. It interacts with LexA causing its activation and leading to its autocatalytic cleavage. In Kineococcus radiotolerans (strain ATCC BAA-149 / DSM 14245 / SRS30216), this protein is Protein RecA.